The following is a 313-amino-acid chain: Ribosomal RNA small subunit methyltransferase H (313 aa).

S-adenosyl-L-methionine is bound by residues 35–37 (GGH), Asp-55, Phe-79, Asp-101, and Gln-108.

Belongs to the methyltransferase superfamily. RsmH family.

The protein localises to the cytoplasm. The catalysed reaction is cytidine(1402) in 16S rRNA + S-adenosyl-L-methionine = N(4)-methylcytidine(1402) in 16S rRNA + S-adenosyl-L-homocysteine + H(+). Specifically methylates the N4 position of cytidine in position 1402 (C1402) of 16S rRNA. The sequence is that of Ribosomal RNA small subunit methyltransferase H from Klebsiella pneumoniae (strain 342).